The following is a 339-amino-acid chain: Phosphate acyltransferase (339 aa).

This sequence belongs to the PlsX family. Homodimer. Probably interacts with PlsY.

The protein resides in the cytoplasm. It catalyses the reaction a fatty acyl-[ACP] + phosphate = an acyl phosphate + holo-[ACP]. Its pathway is lipid metabolism; phospholipid metabolism. Functionally, catalyzes the reversible formation of acyl-phosphate (acyl-PO(4)) from acyl-[acyl-carrier-protein] (acyl-ACP). This enzyme utilizes acyl-ACP as fatty acyl donor, but not acyl-CoA. This Pasteurella multocida (strain Pm70) protein is Phosphate acyltransferase.